The following is a 433-amino-acid chain: Transcription factor TCP18 (433 aa).

2 disordered regions span residues 130–163 (QRIS…GTRD) and 247–281 (DDRG…RTPI). Residues 148–206 (RTDRHSKIKTAKGTRDRRMRLSLDVAKELFGLQDMLGFDKASKTVEWLLTQAKPEIIKI) enclose the TCP domain. The R domain occupies 287 to 304 (KEERAKARERAKGRTMEK).

As to expression, expressed in unelongated axillary buds, and, to a lower extent, in axillary structures such as flowers and siliques.

Its subcellular location is the nucleus. Transcription factor that prevents axillary bud outgrowth and delays early axillary bud development. Indirectly required for the auxin-induced control of apical dominance. The chain is Transcription factor TCP18 from Arabidopsis thaliana (Mouse-ear cress).